The chain runs to 550 residues: Arginine--tRNA ligase (550 aa).

The 'HIGH' region motif lies at 130-140 (ANPTGPIHIGG).

The protein belongs to the class-I aminoacyl-tRNA synthetase family. As to quaternary structure, monomer.

It is found in the cytoplasm. The catalysed reaction is tRNA(Arg) + L-arginine + ATP = L-arginyl-tRNA(Arg) + AMP + diphosphate. The chain is Arginine--tRNA ligase from Mycobacterium ulcerans (strain Agy99).